A 155-amino-acid chain; its full sequence is Large ribosomal subunit protein uL13 (155 aa).

It belongs to the universal ribosomal protein uL13 family. Part of the 50S ribosomal subunit.

Its function is as follows. This protein is one of the early assembly proteins of the 50S ribosomal subunit, although it is not seen to bind rRNA by itself. It is important during the early stages of 50S assembly. The polypeptide is Large ribosomal subunit protein uL13 (Rickettsia conorii (strain ATCC VR-613 / Malish 7)).